The sequence spans 596 residues: Nucleotidyltransferase lcsQ (596 aa).

The transit peptide at 1–22 (MLLRLSPSRMALKRKLDSFLRN) directs the protein to the mitochondrion. The segment at 475–504 (IVAHPGKPSQPADVPETPLSSGASKSKNLD) is disordered.

This sequence belongs to the tRNA nucleotidyltransferase/poly(A) polymerase family.

It localises to the mitochondrion. Nucleotidyltransferase; part of the gene cluster that mediates the biosynthesis of the lipopeptide antibiotics leucinostatins that show extensive biological activities, including antimalarial, antiviral, antibacterial, antifungal, and antitumor activities, as well as phytotoxic. The function of lcsQ within the leucinostatins biosynthesis has not been identified yet. In Purpureocillium lilacinum (Paecilomyces lilacinus), this protein is Nucleotidyltransferase lcsQ.